The following is a 191-amino-acid chain: Cytochrome b-245 light chain (191 aa).

Topologically, residues 2–7 (GQIEWA) are cytoplasmic. A helical transmembrane segment spans residues 8-30 (MWANEQALASGLILITGGIVATA). Residues 31–35 (GQFTQ) lie on the Extracellular side of the membrane. Residues 36–53 (WYLGAYSIAAGVLVCLLE) form a helical membrane-spanning segment. The Cytoplasmic portion of the chain corresponds to 54 to 69 (YPRGKRSKGSTMERCG). Residues 70-80 (QKYLTRVVKLF) lie within the membrane without spanning it. Residues 81–86 (GPLTRN) are Cytoplasmic-facing. Residues 87–104 (YYIRAFLHLGLAVPAGFL) traverse the membrane as a helical segment. A topological domain (extracellular) is located at residue L105. The chain crosses the membrane as a helical span at residues 106–126 (ATILGTACLAIASGIYLLAAI). Topologically, residues 127 to 191 (RGEQWSPIEP…NPMPVNDEVV (65 aa)) are cytoplasmic. The tract at residues 134–191 (IEPKPKERPQIGGTIKQPPSNPPPRPPAEARKKPSEEAAGVPTGGPQENPMPVNDEVV) is disordered. The residue at position 147 (T147) is a Phosphothreonine. K149 participates in a covalent cross-link: Glycyl lysine isopeptide (Lys-Gly) (interchain with G-Cter in ubiquitin). Phosphoserine is present on S168.

It belongs to the p22phox family. Component of the phagocyte NADPH oxidase core complex/cytochrome b558 complex, composed of CYBB (heavy chain (beta)) and CYBA (light chain (alpha)). Component of the phagocyte NADPH oxidase complex composed of an obligatory core heterodimer formed by the membrane proteins CYBA and CYBB and the cytosolic regulatory subunits NCF1/p47-phox, NCF2/p67-phox, NCF4/p40-phox and the small GTPase RAC1 or RAC2. Interacts with NCF1 (via SH3 domain). Interacts with SH3PXD2A. Interacts with DUOX1, DUOX2 and TPO. Interacts with NOX4; this interaction mediates superoxide generation. Interacts with calprotectin (S100A8/9). Interacts with GBP7. Interacts with NOXO1. Forms a heterodimer with NOX3 and is essential for activity and cell membrane localization of NOX3. Interacts with NOX1. In terms of processing, phosphorylation at Thr-147 enhances NADPH oxidase activity by promoting NCF1/p47-phox binding. Ubiquitinated at Lys-149 likely by RNF145.

Its subcellular location is the cell membrane. In terms of biological role, subunit of NADPH oxidase complexes that is required for the NADPH oxidase activity that generates, in various cell types, superoxide from molecular oxygen utilizing NADPH as an electron donor. Subunit of the phagocyte NADPH oxidase complex that mediates the transfer of electrons from cytosolic NADPH to O2 to produce the superoxide anion (O2(-)). In the activated complex, electrons are first transferred from NADPH to flavin adenine dinucleotide (FAD) and subsequently transferred via two heme molecules to molecular oxygen, producing superoxide through an outer-sphere reaction. Activation of the NADPH oxidase complex is initiated by the assembly of cytosolic subunits of the NADPH oxidase complex with the core NADPH oxidase complex to form a complex at the plasma membrane or phagosomal membrane. This activation process is initiated by phosphorylation dependent binding of the cytosolic NCF1/p47-phox subunit to the C-terminus of CYBA/p22-phox. Aassociates with NOX3 to form a functional NADPH oxidase constitutively generating superoxide. This is Cytochrome b-245 light chain from Bos taurus (Bovine).